A 328-amino-acid polypeptide reads, in one-letter code: Malate dehydrogenase (328 aa).

12–18 (GAAGQIG) contributes to the NAD(+) binding site. 2 residues coordinate substrate: Arg92 and Arg98. NAD(+)-binding positions include Asn105, Gln112, and 129 to 131 (TGN). Substrate-binding residues include Asn131 and Arg162. His187 functions as the Proton acceptor in the catalytic mechanism.

Belongs to the LDH/MDH superfamily. MDH type 2 family.

It carries out the reaction (S)-malate + NAD(+) = oxaloacetate + NADH + H(+). Catalyzes the reversible oxidation of malate to oxaloacetate. This Nocardioides sp. (strain ATCC BAA-499 / JS614) protein is Malate dehydrogenase.